The primary structure comprises 239 residues: MKNNIITPQYNCNGTFLRKNRSFVCRKGRITKSQLQAIEKYWLSIGIDFKLEPLDFTSVFKNSAPVILEIGFGSGESLVKTAANFPNKNFLGIEVYKSGIGSCLRLAHYSGINNLKIIYHDAIEVIDQMILDHTLSKVQIFFPDPWNKKRHHKRRMIQDFFLIKILKKLNNDGILHIVTDSKEYNFFILNLIQNIDNYINLSKKRMCFEHFKYRLVTNFEKKAKLSGNKIFDLIFKLKK.

Glutamate 69, glutamate 94, aspartate 121, and aspartate 144 together coordinate S-adenosyl-L-methionine. Aspartate 144 is an active-site residue. Residues lysine 148, aspartate 180, and 217-220 (TNFE) contribute to the substrate site.

The protein belongs to the class I-like SAM-binding methyltransferase superfamily. TrmB family. Monomer.

The enzyme catalyses guanosine(46) in tRNA + S-adenosyl-L-methionine = N(7)-methylguanosine(46) in tRNA + S-adenosyl-L-homocysteine. The protein operates within tRNA modification; N(7)-methylguanine-tRNA biosynthesis. Catalyzes the formation of N(7)-methylguanine at position 46 (m7G46) in tRNA. The polypeptide is tRNA (guanine-N(7)-)-methyltransferase (Buchnera aphidicola subsp. Schizaphis graminum (strain Sg)).